The chain runs to 543 residues: Zinc finger protein 852 (543 aa).

The KRAB domain maps to 8 to 82; the sequence is VAYEDLSEDY…TSGGLFGVVP (75 aa). S145 bears the Phosphoserine mark. C2H2-type zinc fingers lie at residues 159-181, 187-209, 215-237, 243-265, 271-293, 299-321, 327-349, 355-377, 383-405, 411-433, 439-461, and 467-489; these read YRCD…RRIH, YECN…LRTH, YECS…QRLH, YKCN…QRTH, YECK…QFLH, YKCN…QSLH, YKCS…ERIH, FKCS…QRLH, YKCN…QRIH, YECN…QRTH, and YKCN…QRVH.

It belongs to the krueppel C2H2-type zinc-finger protein family.

Its subcellular location is the nucleus. In terms of biological role, may be involved in transcriptional regulation. The chain is Zinc finger protein 852 (ZNF852) from Homo sapiens (Human).